The following is a 480-amino-acid chain: Zinc finger protein ztf-6 (480 aa).

4 disordered regions span residues 92–160 (CHDS…TMMV), 174–198 (GTNG…EEHD), 282–307 (LDAG…PTAS), and 328–351 (DANT…MKVP). 4 stretches are compositionally biased toward low complexity: residues 95–105 (SATSTTTTVSH), 131–145 (SSIE…SSSV), 174–187 (GTNG…TSSS), and 286–296 (SSENDGSTSSS). 2 C2H2-type zinc fingers span residues 359–383 (YICP…FVTH) and 388–410 (FNCD…QKIH). A C2H2-type 3; degenerate zinc finger spans residues 416-441 (YQCRGCGTNYTTQNGLRLHRQRNPAC). Residues 461 to 480 (ALSGPLSKNSSPTKQMVSAP) form a disordered region.

Its function is as follows. Probable transcription factor, involved in regulation of dopamine neuron lineage specification. May play a role in maintaining robustness of the Wnt/beta-catenin asymmetry pathway. This is Zinc finger protein ztf-6 from Caenorhabditis elegans.